A 345-amino-acid chain; its full sequence is MLSTVNNNIVIALDAMGGDFAPLSVIHGAGFFLDNLVDPGIKVFFHIYGDKEEVSPLLLKYKKVSNNSEFTHCSDNVLANDKPSFALRHRKDSSMKAAIVAVKEGKAFGVVSSGNTGALMAISRFILGTLPNIYRPAIASICPTKTKSLALLDLGANVDCNADSLFQFALMGSIFAKIALKIDNPEVALLNIGTEEVKGNDSVRGAFELLKNAPGINFKGYIEASEFLEGNIDVIVADGFVGNVMLKTAEATASTFINLIKQEVFNSWIAKMLVGILLKSKLNKALTRFNPKIRSGAMFLGLNGIIIKSHGNSDAISFAHAIKFAVNAISENLNQKIINGVSHIE.

This sequence belongs to the PlsX family. As to quaternary structure, homodimer. Probably interacts with PlsY.

The protein resides in the cytoplasm. It catalyses the reaction a fatty acyl-[ACP] + phosphate = an acyl phosphate + holo-[ACP]. It functions in the pathway lipid metabolism; phospholipid metabolism. Its function is as follows. Catalyzes the reversible formation of acyl-phosphate (acyl-PO(4)) from acyl-[acyl-carrier-protein] (acyl-ACP). This enzyme utilizes acyl-ACP as fatty acyl donor, but not acyl-CoA. In Wolbachia pipientis wMel, this protein is Phosphate acyltransferase.